Here is a 155-residue protein sequence, read N- to C-terminus: Aspartate carbamoyltransferase regulatory chain (155 aa).

Residues Cys110, Cys115, Cys139, and Cys142 each coordinate Zn(2+).

It belongs to the PyrI family. In terms of assembly, contains catalytic and regulatory chains. Zn(2+) is required as a cofactor.

Involved in allosteric regulation of aspartate carbamoyltransferase. The protein is Aspartate carbamoyltransferase regulatory chain of Yersinia pseudotuberculosis serotype IB (strain PB1/+).